The sequence spans 827 residues: Villin-1 (827 aa).

Residues 1-126 (MTKLNAQVKG…IRKGGVASGM (126 aa)) are necessary for homodimerization. The interval 1-734 (MTKLNAQVKG…YDDLKAELGN (734 aa)) is core. The stretch at 27–76 (MQMVPVPSSTFGSFFDGDCYVVLAIHKTSSTLSYDIHYWIGQDSSQDEQG) is one Gelsolin-like 1 repeat. LPA/PIP2-binding site stretches follow at residues 112-119 (KQGLVIRK) and 138-146 (RLLHVKGKR). 2 Gelsolin-like repeats span residues 148–188 (VLAG…MERL) and 265–309 (LVVR…QERS). Phosphoserine is present on serine 366. Gelsolin-like repeat units lie at residues 407–457 (DLEL…DEIA), 528–568 (TKAF…DERE), and 631–672 (FLAT…EEKK). Residues serine 735 and serine 776 each carry the phosphoserine modification. A headpiece region spans residues 735-827 (SGDWSQIADE…QNIKKEKGLF (93 aa)). Residues 761-827 (SGPLPTFPLE…QNIKKEKGLF (67 aa)) enclose the HP domain. Residues 816–824 (KQQNIKKEK) form an LPA/PIP2-binding site 3 region.

The protein belongs to the villin/gelsolin family. In terms of assembly, monomer. Homodimer; homodimerization is necessary for actin-bundling. Associates with F-actin; phosphorylation at tyrosine residues decreases the association with F-actin. Interacts (phosphorylated at C-terminus tyrosine phosphorylation sites) with PLCG1 (via the SH2 domains). Interacts (phosphorylated form) with PLCG1; the interaction is enhanced by hepatocyte growth factor (HGF). In terms of processing, phosphorylated on tyrosine residues by SRC. The unphosphorylated form increases the initial rate of actin-nucleating activity, whereas the tyrosine phosphorylated form inhibits actin-nucleating activity, enhances actin-bundling activity and enhances actin-severing activity by reducing high Ca(2+) requirements. The tyrosine phosphorylated form does not regulate actin-capping activity. Tyrosine phosphorylation is essential for cell migration: tyrosine phosphorylation sites in the N-terminus half regulate actin reorganization and cell morphology, whereas tyrosine phosphorylation sites in the C-terminus half regulate cell migration via interaction with PLCG1. Tyrosine phosphorylation is induced by epidermal growth factor (EGF) and stimulates cell migration. In terms of tissue distribution, expressed in small intestin, colon, kidney and enterocytes (at protein level).

Its subcellular location is the cytoplasm. It is found in the cytoskeleton. The protein resides in the cell projection. It localises to the microvillus. The protein localises to the lamellipodium. Its subcellular location is the ruffle. It is found in the filopodium tip. The protein resides in the filopodium. Its function is as follows. Epithelial cell-specific Ca(2+)-regulated actin-modifying protein that modulates the reorganization of microvillar actin filaments. Plays a role in the actin nucleation, actin filament bundle assembly, actin filament capping and severing. Binds phosphatidylinositol 4,5-bisphosphate (PIP2) and lysophosphatidic acid (LPA); binds LPA with higher affinity than PIP2. Binding to LPA increases its phosphorylation by SRC and inhibits all actin-modifying activities. Binding to PIP2 inhibits actin-capping and -severing activities but enhances actin-bundling activity. Regulates the intestinal epithelial cell morphology, cell invasion, cell migration and apoptosis. Protects against apoptosis induced by dextran sodium sulfate (DSS) in the gastrointestinal epithelium. Appears to regulate cell death by maintaining mitochondrial integrity. Enhances hepatocyte growth factor (HGF)-induced epithelial cell motility, chemotaxis and wound repair. Upon S.flexneri cell infection, its actin-severing activity enhances actin-based motility of the bacteria and plays a role during the dissemination. In Mus musculus (Mouse), this protein is Villin-1 (Vil1).